Here is a 90-residue protein sequence, read N- to C-terminus: Small ribosomal subunit protein bS16 (90 aa).

It belongs to the bacterial ribosomal protein bS16 family.

In Geobacillus kaustophilus (strain HTA426), this protein is Small ribosomal subunit protein bS16.